We begin with the raw amino-acid sequence, 330 residues long: tRNA pseudouridine synthase B (330 aa).

The active-site Nucleophile is D42.

Belongs to the pseudouridine synthase TruB family. Type 1 subfamily.

It carries out the reaction uridine(55) in tRNA = pseudouridine(55) in tRNA. Responsible for synthesis of pseudouridine from uracil-55 in the psi GC loop of transfer RNAs. In Lactococcus lactis subsp. cremoris (strain MG1363), this protein is tRNA pseudouridine synthase B.